Reading from the N-terminus, the 156-residue chain is 6,7-dimethyl-8-ribityllumazine synthase (156 aa).

Residues Phe22, 57–59 (AYE), and 81–83 (SVI) contribute to the 5-amino-6-(D-ribitylamino)uracil site. 86-87 (GT) contacts (2S)-2-hydroxy-3-oxobutyl phosphate. His89 functions as the Proton donor in the catalytic mechanism. Position 114 (Phe114) interacts with 5-amino-6-(D-ribitylamino)uracil. Residue Arg128 coordinates (2S)-2-hydroxy-3-oxobutyl phosphate.

It belongs to the DMRL synthase family. As to quaternary structure, forms an icosahedral capsid composed of 60 subunits, arranged as a dodecamer of pentamers.

The catalysed reaction is (2S)-2-hydroxy-3-oxobutyl phosphate + 5-amino-6-(D-ribitylamino)uracil = 6,7-dimethyl-8-(1-D-ribityl)lumazine + phosphate + 2 H2O + H(+). Its pathway is cofactor biosynthesis; riboflavin biosynthesis; riboflavin from 2-hydroxy-3-oxobutyl phosphate and 5-amino-6-(D-ribitylamino)uracil: step 1/2. In terms of biological role, catalyzes the formation of 6,7-dimethyl-8-ribityllumazine by condensation of 5-amino-6-(D-ribitylamino)uracil with 3,4-dihydroxy-2-butanone 4-phosphate. This is the penultimate step in the biosynthesis of riboflavin. The polypeptide is 6,7-dimethyl-8-ribityllumazine synthase (Photobacterium profundum (strain SS9)).